Here is a 416-residue protein sequence, read N- to C-terminus: Homogentisate 1,2-dioxygenase (416 aa).

The active-site Proton acceptor is His-275. Fe cation contacts are provided by His-318 and Glu-324. The homogentisate site is built by Tyr-333 and His-354. Fe cation is bound at residue His-354.

The protein belongs to the homogentisate dioxygenase family. As to quaternary structure, hexamer; dimer of trimers. Fe cation serves as cofactor.

The catalysed reaction is homogentisate + O2 = 4-maleylacetoacetate + H(+). Its pathway is amino-acid degradation; L-phenylalanine degradation; acetoacetate and fumarate from L-phenylalanine: step 4/6. In terms of biological role, involved in the catabolism of homogentisate (2,5-dihydroxyphenylacetate or 2,5-OH-PhAc), a central intermediate in the degradation of phenylalanine and tyrosine. Catalyzes the oxidative ring cleavage of the aromatic ring of homogentisate to yield maleylacetoacetate. The chain is Homogentisate 1,2-dioxygenase from Legionella pneumophila subsp. pneumophila (strain Philadelphia 1 / ATCC 33152 / DSM 7513).